A 324-amino-acid polypeptide reads, in one-letter code: Lignin-forming anionic peroxidase (324 aa).

The signal sequence occupies residues 1 to 22 (MSFLRFVGAILFLVAIFGASNA). A Pyrrolidone carboxylic acid modification is found at Gln-23. Intrachain disulfides connect Cys-33-Cys-111, Cys-66-Cys-71, Cys-117-Cys-320, and Cys-196-Cys-228. The N-linked (GlcNAc...) asparagine glycan is linked to Asn-35. His-64 (proton acceptor) is an active-site residue. Positions 65, 68, 70, 72, and 74 each coordinate Ca(2+). Asn-150 is a glycosylation site (N-linked (GlcNAc...) asparagine). Pro-159 contributes to the substrate binding site. His-189 is a heme b binding site. Ca(2+) is bound at residue Thr-190. N-linked (GlcNAc...) asparagine glycosylation occurs at Asn-207. Residues Asp-242, Thr-245, and Asp-250 each coordinate Ca(2+).

It belongs to the peroxidase family. Classical plant (class III) peroxidase subfamily. Ca(2+) serves as cofactor. It depends on heme b as a cofactor.

It localises to the secreted. The catalysed reaction is 2 a phenolic donor + H2O2 = 2 a phenolic radical donor + 2 H2O. In terms of biological role, removal of H(2)O(2), oxidation of toxic reductants, biosynthesis and degradation of lignin, suberization, auxin catabolism, response to environmental stresses such as wounding, pathogen attack and oxidative stress. These functions might be dependent on each isozyme/isoform in each plant tissue. Functionally, plays an integral role in secondary cell wall biosynthesis by the polymerization of cinnamyl alcohols into lignin and by forming rigid cross-links between cellulose, pectin, hydroxy-proline-rich glycoproteins, and lignin. The chain is Lignin-forming anionic peroxidase from Nicotiana tabacum (Common tobacco).